Here is a 126-residue protein sequence, read N- to C-terminus: Protein VraC (126 aa).

The protein is Protein VraC of Staphylococcus haemolyticus (strain JCSC1435).